A 393-amino-acid polypeptide reads, in one-letter code: Protein TsgA (393 aa).

12 consecutive transmembrane segments (helical) span residues 11–31 (WISF…GMVM), 51–71 (FLNA…EIVP), 78–98 (FGFI…SLAL), 101–121 (AAMF…TFLI), 134–154 (LLFT…VAAF), 162–182 (WYWV…LTFG), 206–226 (IGVL…LGFI), 245–265 (ALVS…SFIL), 273–293 (ILTV…TGTQ), 298–318 (WFIL…ITLG), 332–352 (FILT…GPIV), and 361–381 (LLTA…LGFV).

The protein belongs to the major facilitator superfamily. TsgA family.

It localises to the cell inner membrane. The sequence is that of Protein TsgA from Salmonella arizonae (strain ATCC BAA-731 / CDC346-86 / RSK2980).